Reading from the N-terminus, the 200-residue chain is Recombination protein RecR (200 aa).

The C4-type zinc-finger motif lies at 60–75 (CVYCQALTEDDVCNIC). The Toprim domain occupies 83–177 (TKLCIIESML…KISRIGFGVP (95 aa)).

The protein belongs to the RecR family.

Functionally, may play a role in DNA repair. It seems to be involved in an RecBC-independent recombinational process of DNA repair. It may act with RecF and RecO. This chain is Recombination protein RecR, found in Francisella tularensis subsp. holarctica (strain OSU18).